Here is a 291-residue protein sequence, read N- to C-terminus: Phosphatidylglycerol--prolipoprotein diacylglyceryl transferase (291 aa).

The next 4 helical transmembrane spans lie at Trp-24–Leu-44, Phe-64–Tyr-84, Trp-100–Phe-120, and Gly-125–Leu-145. Arg-147 serves as a coordination point for a 1,2-diacyl-sn-glycero-3-phospho-(1'-sn-glycerol). Helical transmembrane passes span Ala-187 to Leu-207, Gly-211 to Phe-231, and Met-247 to Trp-267.

The protein belongs to the Lgt family.

Its subcellular location is the cell inner membrane. The catalysed reaction is L-cysteinyl-[prolipoprotein] + a 1,2-diacyl-sn-glycero-3-phospho-(1'-sn-glycerol) = an S-1,2-diacyl-sn-glyceryl-L-cysteinyl-[prolipoprotein] + sn-glycerol 1-phosphate + H(+). The protein operates within protein modification; lipoprotein biosynthesis (diacylglyceryl transfer). Catalyzes the transfer of the diacylglyceryl group from phosphatidylglycerol to the sulfhydryl group of the N-terminal cysteine of a prolipoprotein, the first step in the formation of mature lipoproteins. This is Phosphatidylglycerol--prolipoprotein diacylglyceryl transferase from Nitrobacter winogradskyi (strain ATCC 25391 / DSM 10237 / CIP 104748 / NCIMB 11846 / Nb-255).